Consider the following 225-residue polypeptide: UPF0758 protein swp_2203 (225 aa).

Residues 102–224 (ILSDPDLTRD…IVSFAERGWI (123 aa)) form the MPN domain. Zn(2+) contacts are provided by histidine 173, histidine 175, and aspartate 186. A JAMM motif motif is present at residues 173 to 186 (HNHPSGIAEPSTAD).

It belongs to the UPF0758 family.

The sequence is that of UPF0758 protein swp_2203 from Shewanella piezotolerans (strain WP3 / JCM 13877).